A 296-amino-acid polypeptide reads, in one-letter code: tRNA dimethylallyltransferase (296 aa).

2 to 9 is an ATP binding site; it reads GPTASGKT. 4 to 9 contacts substrate; that stretch reads TASGKT. Interaction with substrate tRNA regions lie at residues 27–30, 151–155, and 232–237; these read DSAL, QRLSR, and RCVGYR.

It belongs to the IPP transferase family. Monomer. Mg(2+) serves as cofactor.

The catalysed reaction is adenosine(37) in tRNA + dimethylallyl diphosphate = N(6)-dimethylallyladenosine(37) in tRNA + diphosphate. In terms of biological role, catalyzes the transfer of a dimethylallyl group onto the adenine at position 37 in tRNAs that read codons beginning with uridine, leading to the formation of N6-(dimethylallyl)adenosine (i(6)A). The polypeptide is tRNA dimethylallyltransferase (Shewanella baltica (strain OS155 / ATCC BAA-1091)).